Reading from the N-terminus, the 303-residue chain is Sodium/potassium-transporting ATPase subunit beta-1 (303 aa).

Topologically, residues 1 to 34 are cytoplasmic; the sequence is MPAATKDSDGGWKKFLWNSEKKEFLGRTGGSWAK. A helical; Signal-anchor for type II membrane protein membrane pass occupies residues 35–55; that stretch reads ILLFYVIFYGCLAGIFIGTIQ. Residues 56-303 are Extracellular-facing; it reads ALLLTINDFK…FDVKFTINES (248 aa). Residue Asn113 is glycosylated (N-linked (GlcNAc...) asparagine). Cystine bridges form between Cys126/Cys149 and Cys159/Cys175. Residues Asn194 and Asn264 are each glycosylated (N-linked (GlcNAc...) asparagine). A disulfide bond links Cys214 and Cys275.

The protein belongs to the X(+)/potassium ATPases subunit beta family. As to quaternary structure, the sodium/potassium-transporting ATPase is composed of a catalytic alpha subunit, an auxiliary non-catalytic beta subunit and an additional regulatory subunit. Detected in all tissues except liver and cardiac muscle. Highest levels found in intestine, ovary and kidney with marginally lower levels in brain, spleen, esophagus, eye and pancreas, intermediate levels in gill and low levels in white and red skeletal muscle.

It is found in the cell membrane. Functionally, this is the non-catalytic component of the active enzyme, which catalyzes the hydrolysis of ATP coupled with the exchange of Na(+) and K(+) ions across the plasma membrane. The beta subunit regulates, through assembly of alpha/beta heterodimers, the number of sodium pumps transported to the plasma membrane. This chain is Sodium/potassium-transporting ATPase subunit beta-1 (atp1b1), found in Anguilla anguilla (European freshwater eel).